The chain runs to 110 residues: Large ribosomal subunit protein uL22 (110 aa).

Belongs to the universal ribosomal protein uL22 family. Part of the 50S ribosomal subunit.

In terms of biological role, this protein binds specifically to 23S rRNA; its binding is stimulated by other ribosomal proteins, e.g. L4, L17, and L20. It is important during the early stages of 50S assembly. It makes multiple contacts with different domains of the 23S rRNA in the assembled 50S subunit and ribosome. Functionally, the globular domain of the protein is located near the polypeptide exit tunnel on the outside of the subunit, while an extended beta-hairpin is found that lines the wall of the exit tunnel in the center of the 70S ribosome. This is Large ribosomal subunit protein uL22 from Pasteurella multocida (strain Pm70).